We begin with the raw amino-acid sequence, 330 residues long: Malate dehydrogenase (330 aa).

NAD(+) is bound at residue 12-18; it reads GAAGQIG. 2 residues coordinate substrate: arginine 93 and arginine 99. Residues asparagine 106, glutamine 113, and 130–132 each bind NAD(+); that span reads VGN. Substrate-binding residues include asparagine 132 and arginine 163. The Proton acceptor role is filled by histidine 188.

Belongs to the LDH/MDH superfamily. MDH type 2 family.

It carries out the reaction (S)-malate + NAD(+) = oxaloacetate + NADH + H(+). Its function is as follows. Catalyzes the reversible oxidation of malate to oxaloacetate. This is Malate dehydrogenase from Legionella pneumophila (strain Lens).